A 153-amino-acid polypeptide reads, in one-letter code: Arachidonate 5-lipoxygenase-activating protein (153 aa).

Over 1–8 (MDQETVGN) the chain is Lumenal. Residues 9–30 (IVLLAIVTLISVVQNGFFAHKV) form a helical membrane-spanning segment. Over 31–52 (EHESKTHNGRSFQRTGPLAFER) the chain is Cytoplasmic. The chain crosses the membrane as a helical span at residues 53 to 77 (VYTANQNCVDAYPTFLVMLWSAGLL). Residues 78-80 (CSQ) lie on the Lumenal side of the membrane. The helical transmembrane segment at 81–102 (VPAAFAGLMYLFVRQKYFVGYL) threads the bilayer. Residues 103 to 107 (GERTQ) lie on the Cytoplasmic side of the membrane. The stretch at 108 to 115 (STPGYIFG) is an intramembrane region. A helical membrane pass occupies residues 116-128 (KRIILFLFAMSLA). Residues 129-153 (GILNYFLIAFFGSDFENYIKTVTTT) are Lumenal-facing.

Belongs to the MAPEG family. As to quaternary structure, homotrimer. Interacts with LTC4S and ALOX5.

It localises to the nucleus membrane. The protein resides in the endoplasmic reticulum membrane. Required for leukotriene biosynthesis by ALOX5 (5-lipoxygenase). Anchors ALOX5 to the membrane. Binds arachidonic acid, and could play an essential role in the transfer of arachidonic acid to ALOX5. Binds to MK-886, a compound that blocks the biosynthesis of leukotrienes. The chain is Arachidonate 5-lipoxygenase-activating protein (ALOX5AP) from Ovis aries (Sheep).